A 337-amino-acid chain; its full sequence is Tetraacyldisaccharide 4'-kinase (337 aa).

Thr-55–Thr-62 provides a ligand contact to ATP.

Belongs to the LpxK family.

It carries out the reaction a lipid A disaccharide + ATP = a lipid IVA + ADP + H(+). It participates in glycolipid biosynthesis; lipid IV(A) biosynthesis; lipid IV(A) from (3R)-3-hydroxytetradecanoyl-[acyl-carrier-protein] and UDP-N-acetyl-alpha-D-glucosamine: step 6/6. Functionally, transfers the gamma-phosphate of ATP to the 4'-position of a tetraacyldisaccharide 1-phosphate intermediate (termed DS-1-P) to form tetraacyldisaccharide 1,4'-bis-phosphate (lipid IVA). This chain is Tetraacyldisaccharide 4'-kinase, found in Sodalis glossinidius (strain morsitans).